A 310-amino-acid polypeptide reads, in one-letter code: Olfactory receptor 4D1 (310 aa).

Over 1-25 the chain is Extracellular; it reads MEPQNTTQVSMFVLLGFSQTQELQK. N-linked (GlcNAc...) asparagine glycosylation occurs at asparagine 5. A helical transmembrane segment spans residues 26–49; that stretch reads FLFLLFLLVYVTTIVGNLLIMVTV. Residues 50–57 are Cytoplasmic-facing; the sequence is TFDCRLHT. Residues 58-79 traverse the membrane as a helical segment; it reads PMYFLLRNLALIDLCYSTVTSP. Residues 80–100 are Extracellular-facing; sequence KMLVDFLHETKTISYQGCMAQ. Cysteine 97 and cysteine 189 are oxidised to a cystine. Residues 101–120 form a helical membrane-spanning segment; sequence IFFFHLLGGGTVFFLSVMAY. The Cytoplasmic segment spans residues 121 to 139; it reads DRYIAISQPLRYVTIMNTQ. A helical membrane pass occupies residues 140 to 158; sequence LCVGLVVAAWVGGFVHSIV. Residues 159–195 are Extracellular-facing; sequence QLALILPLPFCGPNILDNFYCDVPQVLRLACTDTSLL. Residues 196-219 form a helical membrane-spanning segment; the sequence is EFLMISNSGLLVIIWFLLLLISYT. The Cytoplasmic segment spans residues 220 to 235; that stretch reads VILVMLRSHSGKARRK. The helical transmembrane segment at 236 to 258 threads the bilayer; the sequence is AASTCTTHIIVVSMIFIPCIYIY. Residues 259–269 are Extracellular-facing; the sequence is TWPFTPFLMDK. A helical transmembrane segment spans residues 270–289; sequence AVSISYTVMTPMLNPMIYTL. The Cytoplasmic portion of the chain corresponds to 290-310; that stretch reads RNQDMKAAMRRLGKCLVICRE.

It belongs to the G-protein coupled receptor 1 family.

The protein localises to the cell membrane. Odorant receptor. This is Olfactory receptor 4D1 (OR4D1) from Homo sapiens (Human).